The following is a 128-amino-acid chain: Cytochrome c' (128 aa).

Positions 13, 17, 69, 70, 118, 121, and 122 each coordinate heme c.

In terms of assembly, homodimer. Post-translationally, binds 1 heme c group covalently per subunit.

In terms of biological role, cytochrome c' is the most widely occurring bacterial c-type cytochrome. Cytochromes c' are high-spin proteins and the heme has no sixth ligand. Their exact function is not known. This chain is Cytochrome c', found in Magnetospirillum molischianum (Rhodospirillum molischianum).